The following is a 209-amino-acid chain: Pyridoxine/pyridoxamine 5'-phosphate oxidase (209 aa).

Residues 7 to 10 (REDY) and K64 contribute to the substrate site. Residues 59–64 (RIVLLK), 74–75 (FT), R80, and K81 each bind FMN. Y121, R125, and S129 together coordinate substrate. FMN contacts are provided by residues 138-139 (QS) and W182. A substrate-binding site is contributed by 188 to 190 (RLH). R192 provides a ligand contact to FMN.

Belongs to the pyridoxamine 5'-phosphate oxidase family. As to quaternary structure, homodimer. It depends on FMN as a cofactor.

The enzyme catalyses pyridoxamine 5'-phosphate + O2 + H2O = pyridoxal 5'-phosphate + H2O2 + NH4(+). It carries out the reaction pyridoxine 5'-phosphate + O2 = pyridoxal 5'-phosphate + H2O2. It functions in the pathway cofactor metabolism; pyridoxal 5'-phosphate salvage; pyridoxal 5'-phosphate from pyridoxamine 5'-phosphate: step 1/1. It participates in cofactor metabolism; pyridoxal 5'-phosphate salvage; pyridoxal 5'-phosphate from pyridoxine 5'-phosphate: step 1/1. Its function is as follows. Catalyzes the oxidation of either pyridoxine 5'-phosphate (PNP) or pyridoxamine 5'-phosphate (PMP) into pyridoxal 5'-phosphate (PLP). This is Pyridoxine/pyridoxamine 5'-phosphate oxidase from Actinobacillus pleuropneumoniae serotype 7 (strain AP76).